Here is a 163-residue protein sequence, read N- to C-terminus: UPF0260 protein GOX1406 (163 aa).

It belongs to the UPF0260 family.

This is UPF0260 protein GOX1406 from Gluconobacter oxydans (strain 621H) (Gluconobacter suboxydans).